The sequence spans 111 residues: Nucleoid-associated protein Ppha_1174 (111 aa).

Belongs to the YbaB/EbfC family. In terms of assembly, homodimer.

The protein localises to the cytoplasm. It localises to the nucleoid. Binds to DNA and alters its conformation. May be involved in regulation of gene expression, nucleoid organization and DNA protection. The protein is Nucleoid-associated protein Ppha_1174 of Pelodictyon phaeoclathratiforme (strain DSM 5477 / BU-1).